Here is a 1347-residue protein sequence, read N- to C-terminus: Protein HUA2-LIKE 3 (1347 aa).

Residues 24 to 81 enclose the PWWP domain; sequence VGDLVLAKVKGFPAWPAVVDEPEKWGHSADSKKVTVHFFGTQQIAFCNHGDVESFTEE. 3 disordered regions span residues 110–137, 251–320, and 383–402; these read KLKQ…TSQL, DGGP…SGSK, and DSCQ…PCEE. Residues 127–137 are compositionally biased toward polar residues; sequence TAGSSGNTSQL. Positions 302 to 314 are enriched in low complexity; that stretch reads VESNNNSRNEGNG. A compositionally biased stretch (basic and acidic residues) spans 390–402; that stretch reads NSHERLNERPCEE. The region spanning 845–986 is the CID domain; it reads DVQCTVESFE…HHIRELDSLS (142 aa). 4 disordered regions span residues 1037–1069, 1121–1140, 1147–1223, and 1259–1347; these read RDED…VTPS, TSHQ…QNAQ, YSNG…YSYM, and RMRP…WHQR. Residues 1038 to 1049 are compositionally biased toward acidic residues; it reads DEDEGSDSDGGD. The segment covering 1054-1069 has biased composition (basic and acidic residues); it reads TPEHESRSLEEHVTPS. The span at 1181–1191 shows a compositional bias: polar residues; the sequence is PSYSSRVSLSK. Residues 1208–1217 show a composition bias toward pro residues; it reads SSHPPPPPPS. Residues 1259–1272 are compositionally biased toward basic and acidic residues; that stretch reads RMRPEPCENRDNWR.

Expressed throughout young primordia, and vegetative and reproductive apices.

The protein localises to the nucleus. Probable transcription factor that acts with partial redundancy with HULK1 and HULK2. Plays diverse and essential roles in the control of plant development, physiology and flowering time. In Arabidopsis thaliana (Mouse-ear cress), this protein is Protein HUA2-LIKE 3.